A 93-amino-acid chain; its full sequence is Small ribosomal subunit protein uS19 (93 aa).

This sequence belongs to the universal ribosomal protein uS19 family.

Protein S19 forms a complex with S13 that binds strongly to the 16S ribosomal RNA. The protein is Small ribosomal subunit protein uS19 of Campylobacter concisus (strain 13826).